A 438-amino-acid polypeptide reads, in one-letter code: Na(+)/H(+) antiporter NhaA 2 (438 aa).

11 helical membrane-spanning segments follow: residues 21–41 (SGGI…NSPW), 66–86 (LHHW…GLEL), 102–122 (MLPI…FHFI), 130–150 (KGWG…LALL), 160–180 (IFLT…IALF), 183–203 (GELA…LIAG), 206–226 (LGVQ…VVLL), 308–328 (WVIF…VLQL), 341–361 (LGVA…FSWI), 376–396 (WMDV…SLFI), and 410–430 (AKLG…TVLS).

Belongs to the NhaA Na(+)/H(+) (TC 2.A.33) antiporter family.

Its subcellular location is the cell inner membrane. It carries out the reaction Na(+)(in) + 2 H(+)(out) = Na(+)(out) + 2 H(+)(in). In terms of biological role, na(+)/H(+) antiporter that extrudes sodium in exchange for external protons. The polypeptide is Na(+)/H(+) antiporter NhaA 2 (Syntrophotalea carbinolica (strain DSM 2380 / NBRC 103641 / GraBd1) (Pelobacter carbinolicus)).